The sequence spans 735 residues: Protein STRUBBELIG-RECEPTOR FAMILY 2 (735 aa).

An N-terminal signal peptide occupies residues 1–23 (MKTKQQLRFLATILLTTILFVLA). Over 24–297 (KTDTDPLEVL…KKKKKGIGAG (274 aa)) the chain is Extracellular. LRR repeat units lie at residues 78–94 (LRELKLLGSLGNQLQHL), 96–119 (NLKILDVSFNNLEGEIPFGLPPNA), 120–140 (THINMAYNNLTQSIPFSLPLM), 142–163 (SLQSLNLSHNSLSGPLGNVFSG), 165–187 (QIKEMDLSFNNLTGDLPSSFGTL), 189–211 (NLTSLYLQNNRLTGSVIYLADLP), 212–232 (LADLNIEDNQFSGIIPSHFQS), and 233–253 (IPHLWIWGNKFHVEPNYKPWK). N118, N128, N147, N175, and N189 each carry an N-linked (GlcNAc...) asparagine glycan. An N-linked (GlcNAc...) asparagine glycan is attached at N264. The chain crosses the membrane as a helical span at residues 298–318 (STFLLVGGLALLGTFFALFAV). Topologically, residues 319–735 (RMNHRRAQNL…SSPTFSYLSS (417 aa)) are cytoplasmic. The disordered stretch occupies residues 358–378 (PQIKRFQPPPAPQLRHLPSPP). Residues 415–695 (FSEENLLGEG…EIVEALTALI (281 aa)) form the Protein kinase domain.

It belongs to the protein kinase superfamily. Ser/Thr protein kinase family. As to expression, expressed in seedlings, roots, stems, leaves, flowers and siliques.

It localises to the membrane. This chain is Protein STRUBBELIG-RECEPTOR FAMILY 2 (SRF2), found in Arabidopsis thaliana (Mouse-ear cress).